A 725-amino-acid polypeptide reads, in one-letter code: MSLLSKLHLILYICLLLLPLRFVNAEQLSGSGESQPVHIEADRIDGHYQQEIEATGNVRMRRGDQTLSADHVKYYQDTEDVEVKGNALLERPDDTLWGTFLQMNLQTDIGELRDPRYALKGGNGRGSGSLLLLEGENQYRIKKARYTTCPEDNHDWYILADDLEIDNEKKVGTARHASIRFKDVPILYLPWMNFSFSKERKTGFLSPIMGNTSRSGVEVSVPFYWNIAPNYDATITPRLMSRRGVMLDNEFRYIGQGLGGRLQFDYLPNDLVTDTTRYGLQFNHSQFLGSGWFGALNYNRVSDHNYFRDLGNNILFTSQVNLLQQATASYFSELGRNGMLTFSTLMQQFQTVQDPRAPIISPFKILPRFTLNAVKSNVYGLDFDLASSFTHFSHPTLPHGLRFTAFPSVALPLENSFGFIRPRVGLHYTKYDLNTPAFPGTNDKHPDRSVPIFSLDSGVVLERDMTLGGGNFIQTLEPRVFYTYIPYREQRLLPNFDSAEMDFSFAQLFMEKRFSGEDRINDANEITLAMSSRLIHSATGNERLRFSVGQRIRFSDRRVLLTSPQVTRAGSDFIAELSGSLAQHVKTDAGIQLNQNNLLIEKIRTGISYNPAPGQVINAGYRFTRDVLEQVDLSTQWPFLKRWQGFAAINYSLKNDKLLAGLLGLEYNACCWSLRLVASRFTTATQKTSTNIFVQLELNDLMRIGTNPIRVLQQSIPGYVRTDLQ.

Positions 1-25 are cleaved as a signal peptide; that stretch reads MSLLSKLHLILYICLLLLPLRFVNA.

Belongs to the LptD family. In terms of assembly, component of the lipopolysaccharide transport and assembly complex. Interacts with LptE and LptA.

It is found in the cell outer membrane. Functionally, together with LptE, is involved in the assembly of lipopolysaccharide (LPS) at the surface of the outer membrane. This is LPS-assembly protein LptD from Nitrosomonas eutropha (strain DSM 101675 / C91 / Nm57).